We begin with the raw amino-acid sequence, 275 residues long: Dihydroxyacetone phosphatase (275 aa).

The active-site Nucleophile is the Asp-10. Residues Asp-10, Asp-12, and Asp-206 each contribute to the Mg(2+) site. The active-site Proton donor/acceptor is the Asp-12.

It belongs to the HAD-like hydrolase superfamily. Homohexamer. Mg(2+) is required as a cofactor.

It carries out the reaction dihydroxyacetone phosphate + H2O = dihydroxyacetone + phosphate. Functionally, catalyzes dephosphorylation of dihydroxyacetone phosphate (DHAP) to produce 1,3-dihydroxyacetone (DHA). Is the main enzyme responsible for DHA production from catabolism of sugars (glucose, fructose, and sucrose) in C.glutamicum. Displays no activity toward nucleoside monophosphates (AMP, CMP, GMP, or UMP). The polypeptide is Dihydroxyacetone phosphatase (Corynebacterium glutamicum (strain R)).